We begin with the raw amino-acid sequence, 630 residues long: Cytochrome B pre-mRNA-processing protein 2 (630 aa).

It localises to the mitochondrion. Its function is as follows. Appears to be specifically required for the splicing of the terminal intron (bI5) of the cytochrome b pre-mRNA. Can also stimulates the splicing of the omega intron of the precursor of large ribosomal RNA. The polypeptide is Cytochrome B pre-mRNA-processing protein 2 (CBP2) (Saccharomyces paradoxus (Yeast)).